Consider the following 496-residue polypeptide: Acyltransferase M4 (496 aa).

His163 serves as the catalytic Proton acceptor.

Belongs to the plant acyltransferase family. In terms of assembly, monomer.

Its pathway is secondary metabolite biosynthesis. Its function is as follows. Acyltransferase; part of the gene cluster that mediates the biosynthesis of squalestatin S1 (SQS1, also known as zaragozic acid A), a heavily oxidized fungal polyketide that offers potent cholesterol lowering activity by targeting squalene synthase (SS). SQS1 is composed of a 2,8-dioxobicyclic[3.2.1]octane-3,4,5-tricarboxyclic acid core that is connected to two lipophilic polyketide arms. These initial steps feature the priming of an unusual benzoic acid starter unit onto the highly reducing polyketide synthase pks2, followed by oxaloacetate extension and product release to generate a tricarboxylic acid containing product. The phenylalanine ammonia lyase (PAL) M7 and the acyl-CoA ligase M9 are involved in transforming phenylalanine into benzoyl-CoA. The citrate synthase-like protein R3 is involved in connecting the C-alpha-carbons of the hexaketide chain and oxaloacetate to afford the tricarboxylic acid unit. The potential hydrolytic enzymes, M8 and M10, are in close proximity to pks2 and may participate in product release. On the other side, the tetraketide arm is synthesized by a the squalestatin tetraketide synthase pks1 and enzymatically esterified to the core in the last biosynthetic step, by the acetyltransferase M4. The biosynthesis of the tetraketide must involve 3 rounds of chain extension. After the first and second rounds methyl-transfer occurs, and in all rounds of extension the ketoreductase and dehydratase are active. The enoyl reductase and C-MeT of pks1 are not active in the final round of extension. The acetyltransferase M4 appears to have a broad substrate selectivity for its acyl CoA substrate, allowing the in vitro synthesis of novel squalestatins. The biosynthesis of SQS1 requires several oxidative steps likely performed by oxidoreductases M1, R1 and R2. Finally, in support of the identification of the cluster as being responsible for SQS1 production, the cluster contains a gene encoding a putative squalene synthase (SS) R6, suggesting a likely mechanism for self-resistance. The sequence is that of Acyltransferase M4 from Phoma sp. (strain ATCC 20986 / MF5453).